We begin with the raw amino-acid sequence, 705 residues long: DNA ligase (705 aa).

NAD(+) is bound by residues 43–47 (DAEYD), 92–93 (SL), and Asp123. The active-site N6-AMP-lysine intermediate is the Lys125. Residues Arg146, Glu184, Lys304, and Lys328 each coordinate NAD(+). Zn(2+) contacts are provided by Cys422, Cys425, Cys440, and Cys445. The BRCT domain maps to 607–696 (TPVTPLAGKK…EEISGQAADD (90 aa)). Positions 684–705 (SESEEISGQAADDYENSLLRVQ) are disordered.

Belongs to the NAD-dependent DNA ligase family. LigA subfamily. Mg(2+) serves as cofactor. Requires Mn(2+) as cofactor.

The catalysed reaction is NAD(+) + (deoxyribonucleotide)n-3'-hydroxyl + 5'-phospho-(deoxyribonucleotide)m = (deoxyribonucleotide)n+m + AMP + beta-nicotinamide D-nucleotide.. Its function is as follows. DNA ligase that catalyzes the formation of phosphodiester linkages between 5'-phosphoryl and 3'-hydroxyl groups in double-stranded DNA using NAD as a coenzyme and as the energy source for the reaction. It is essential for DNA replication and repair of damaged DNA. This Oleidesulfovibrio alaskensis (strain ATCC BAA-1058 / DSM 17464 / G20) (Desulfovibrio alaskensis) protein is DNA ligase.